We begin with the raw amino-acid sequence, 290 residues long: Shikimate dehydrogenase (NADP(+)) (290 aa).

Residues 21–23 (SLS) and Thr68 contribute to the shikimate site. Lys72 serves as the catalytic Proton acceptor. An NADP(+)-binding site is contributed by Glu84. Asn93 and Asp108 together coordinate shikimate. Residues 132 to 136 (GYGGA) and Leu230 contribute to the NADP(+) site. Tyr232 is a binding site for shikimate. NADP(+) is bound at residue Gly253.

The protein belongs to the shikimate dehydrogenase family. In terms of assembly, homodimer.

It catalyses the reaction shikimate + NADP(+) = 3-dehydroshikimate + NADPH + H(+). The protein operates within metabolic intermediate biosynthesis; chorismate biosynthesis; chorismate from D-erythrose 4-phosphate and phosphoenolpyruvate: step 4/7. Functionally, involved in the biosynthesis of the chorismate, which leads to the biosynthesis of aromatic amino acids. Catalyzes the reversible NADPH linked reduction of 3-dehydroshikimate (DHSA) to yield shikimate (SA). The chain is Shikimate dehydrogenase (NADP(+)) from Synechocystis sp. (strain ATCC 27184 / PCC 6803 / Kazusa).